Reading from the N-terminus, the 678-residue chain is uncharacterized protein (678 aa).

This is an uncharacterized protein from Ostreid herpesvirus 1 (isolate France) (OsHV-1).